The primary structure comprises 323 residues: o-succinylbenzoate synthase (323 aa).

The active-site Proton donor is the lysine 134. 3 residues coordinate Mg(2+): aspartate 162, glutamate 191, and aspartate 214. Residue lysine 236 is the Proton acceptor of the active site.

Belongs to the mandelate racemase/muconate lactonizing enzyme family. MenC type 1 subfamily. Requires a divalent metal cation as cofactor.

It catalyses the reaction (1R,6R)-6-hydroxy-2-succinyl-cyclohexa-2,4-diene-1-carboxylate = 2-succinylbenzoate + H2O. It functions in the pathway quinol/quinone metabolism; 1,4-dihydroxy-2-naphthoate biosynthesis; 1,4-dihydroxy-2-naphthoate from chorismate: step 4/7. It participates in quinol/quinone metabolism; menaquinone biosynthesis. Converts 2-succinyl-6-hydroxy-2,4-cyclohexadiene-1-carboxylate (SHCHC) to 2-succinylbenzoate (OSB). The chain is o-succinylbenzoate synthase from Yersinia pseudotuberculosis serotype O:1b (strain IP 31758).